A 909-amino-acid polypeptide reads, in one-letter code: Ribosome-releasing factor 2, mitochondrial (909 aa).

The N-terminal 15 residues, 1-15, are a transit peptide targeting the mitochondrion; that stretch reads MVAAPLLRAHQAARL. The tr-type G domain maps to 57–367; sequence DRTRNIGIIA…AVTNLLPSPP (311 aa). 66–73 serves as a coordination point for GTP; it reads AHIDAGKT. Residues 121–148 are disordered; it reads WPPQTAGDGNTTPQEPQTPRSASSHTVN. The span at 127–148 shows a compositional bias: polar residues; sequence GDGNTTPQEPQTPRSASSHTVN. GTP-binding positions include 151 to 155 and 205 to 208; these read DTPGH and NKLD.

Belongs to the TRAFAC class translation factor GTPase superfamily. Classic translation factor GTPase family. EF-G/EF-2 subfamily.

It localises to the mitochondrion. Mitochondrial GTPase that mediates the disassembly of ribosomes from messenger RNA at the termination of mitochondrial protein biosynthesis. Not involved in the GTP-dependent ribosomal translocation step during translation elongation. The polypeptide is Ribosome-releasing factor 2, mitochondrial (mef2) (Aspergillus flavus (strain ATCC 200026 / FGSC A1120 / IAM 13836 / NRRL 3357 / JCM 12722 / SRRC 167)).